The following is a 249-amino-acid chain: Triosephosphate isomerase (249 aa).

Substrate is bound at residue 8–10 (NWK). The active-site Electrophile is His95. The active-site Proton acceptor is Glu163. The substrate site is built by Gly169 and Ser209.

The protein belongs to the triosephosphate isomerase family. As to quaternary structure, homodimer.

It is found in the cytoplasm. It catalyses the reaction D-glyceraldehyde 3-phosphate = dihydroxyacetone phosphate. It participates in carbohydrate biosynthesis; gluconeogenesis. Its pathway is carbohydrate degradation; glycolysis; D-glyceraldehyde 3-phosphate from glycerone phosphate: step 1/1. In terms of biological role, involved in the gluconeogenesis. Catalyzes stereospecifically the conversion of dihydroxyacetone phosphate (DHAP) to D-glyceraldehyde-3-phosphate (G3P). This is Triosephosphate isomerase from Orientia tsutsugamushi (strain Boryong) (Rickettsia tsutsugamushi).